We begin with the raw amino-acid sequence, 317 residues long: Protoheme IX farnesyltransferase (317 aa).

Transmembrane regions (helical) follow at residues 44 to 64 (IGLI…ANTF), 93 to 113 (HASV…WVLC), 116 to 136 (VLAG…YTKY), 143 to 163 (LNIV…WAVI), 178 to 198 (AIVL…ALAM), 221 to 241 (VTRQ…LLIP), 243 to 263 (ASWI…VMAV), and 288 to 308 (LAVY…TIGG).

The protein belongs to the UbiA prenyltransferase family. Protoheme IX farnesyltransferase subfamily.

The protein localises to the cell membrane. It carries out the reaction heme b + (2E,6E)-farnesyl diphosphate + H2O = Fe(II)-heme o + diphosphate. It participates in porphyrin-containing compound metabolism; heme O biosynthesis; heme O from protoheme: step 1/1. Functionally, converts heme B (protoheme IX) to heme O by substitution of the vinyl group on carbon 2 of heme B porphyrin ring with a hydroxyethyl farnesyl side group. The chain is Protoheme IX farnesyltransferase from Corynebacterium diphtheriae (strain ATCC 700971 / NCTC 13129 / Biotype gravis).